Reading from the N-terminus, the 863-residue chain is DNA mismatch repair protein MutS 2 (863 aa).

626–633 serves as a coordination point for ATP; that stretch reads GPNMSGKS.

This sequence belongs to the DNA mismatch repair MutS family.

Functionally, this protein is involved in the repair of mismatches in DNA. It is possible that it carries out the mismatch recognition step. This protein has a weak ATPase activity. The protein is DNA mismatch repair protein MutS 2 (mutS2) of Halobacterium salinarum (strain ATCC 700922 / JCM 11081 / NRC-1) (Halobacterium halobium).